The sequence spans 841 residues: Translation initiation factor IF-2 (841 aa).

Residues 87–254 form a disordered region; sequence RKKKVFVQRS…KRNAHGFQSP (168 aa). The span at 96–135 shows a compositional bias: basic and acidic residues; it reads SPEEIEAERKREMDERRAVENAARQKAEEEAKRRAEEDAR. The segment covering 136–175 has biased composition (low complexity); that stretch reads SQPAASQSAPAAAEPVAAAEPVREAAPAAAPAPASAAPSA. 2 stretches are compositionally biased toward basic and acidic residues: residues 176 to 217 and 225 to 234; these read DARK…EKAP and TTDEESDSFR. Residues 235 to 248 show a composition bias toward basic residues; it reads RGGRGKGKLKKRNA. The tr-type G domain occupies 341-510; the sequence is SRAPVVTVMG…LLQAEVLELK (170 aa). Residues 350-357 are G1; the sequence is GHVDHGKT. 350-357 contacts GTP; that stretch reads GHVDHGKT. The G2 stretch occupies residues 375-379; that stretch reads GITQH. A G3 region spans residues 396–399; sequence DTPG. GTP contacts are provided by residues 396–400 and 450–453; these read DTPGH and NKID. The G4 stretch occupies residues 450-453; the sequence is NKID. The segment at 486-488 is G5; sequence SAK.

It belongs to the TRAFAC class translation factor GTPase superfamily. Classic translation factor GTPase family. IF-2 subfamily.

The protein localises to the cytoplasm. Its function is as follows. One of the essential components for the initiation of protein synthesis. Protects formylmethionyl-tRNA from spontaneous hydrolysis and promotes its binding to the 30S ribosomal subunits. Also involved in the hydrolysis of GTP during the formation of the 70S ribosomal complex. This chain is Translation initiation factor IF-2, found in Pseudomonas syringae pv. syringae (strain B728a).